The following is a 711-amino-acid chain: Ribosomal RNA large subunit methyltransferase K/L (711 aa).

The THUMP domain occupies 43-154; the sequence is LGYRITLWSR…RGQITIGLNF (112 aa).

This sequence belongs to the methyltransferase superfamily. RlmKL family.

The protein resides in the cytoplasm. The enzyme catalyses guanosine(2445) in 23S rRNA + S-adenosyl-L-methionine = N(2)-methylguanosine(2445) in 23S rRNA + S-adenosyl-L-homocysteine + H(+). It catalyses the reaction guanosine(2069) in 23S rRNA + S-adenosyl-L-methionine = N(2)-methylguanosine(2069) in 23S rRNA + S-adenosyl-L-homocysteine + H(+). In terms of biological role, specifically methylates the guanine in position 2445 (m2G2445) and the guanine in position 2069 (m7G2069) of 23S rRNA. The protein is Ribosomal RNA large subunit methyltransferase K/L of Shewanella woodyi (strain ATCC 51908 / MS32).